Here is a 377-residue protein sequence, read N- to C-terminus: Glutamate 5-kinase (377 aa).

K22 contributes to the ATP binding site. Residues S62, D149, and N161 each contribute to the substrate site. ATP is bound by residues 181–182 (TD) and 223–229 (TGGMVTK). In terms of domain architecture, PUA spans 285-363 (RGAIVVDAGA…AQLKRFLGPQ (79 aa)).

This sequence belongs to the glutamate 5-kinase family.

It is found in the cytoplasm. The enzyme catalyses L-glutamate + ATP = L-glutamyl 5-phosphate + ADP. Its pathway is amino-acid biosynthesis; L-proline biosynthesis; L-glutamate 5-semialdehyde from L-glutamate: step 1/2. Its function is as follows. Catalyzes the transfer of a phosphate group to glutamate to form L-glutamate 5-phosphate. The chain is Glutamate 5-kinase from Bifidobacterium longum subsp. infantis (strain ATCC 15697 / DSM 20088 / JCM 1222 / NCTC 11817 / S12).